Reading from the N-terminus, the 279-residue chain is Pantothenate synthetase (279 aa).

Methionine 26–histidine 33 is a binding site for ATP. The active-site Proton donor is histidine 33. A (R)-pantoate-binding site is contributed by glutamine 57. Beta-alanine is bound at residue glutamine 57. An ATP-binding site is contributed by glycine 144–aspartate 147. Glutamine 150 provides a ligand contact to (R)-pantoate. ATP contacts are provided by residues valine 173 and leucine 181–arginine 184.

It belongs to the pantothenate synthetase family. In terms of assembly, homodimer.

It localises to the cytoplasm. It catalyses the reaction (R)-pantoate + beta-alanine + ATP = (R)-pantothenate + AMP + diphosphate + H(+). It functions in the pathway cofactor biosynthesis; (R)-pantothenate biosynthesis; (R)-pantothenate from (R)-pantoate and beta-alanine: step 1/1. In terms of biological role, catalyzes the condensation of pantoate with beta-alanine in an ATP-dependent reaction via a pantoyl-adenylate intermediate. The chain is Pantothenate synthetase from Burkholderia lata (strain ATCC 17760 / DSM 23089 / LMG 22485 / NCIMB 9086 / R18194 / 383).